A 246-amino-acid polypeptide reads, in one-letter code: Large ribosomal subunit protein uL2 (246 aa).

The interval 196 to 226 is disordered; it reads MSPYAHPHGGGSHQKGGTPVPKTAPPGQKVG.

Belongs to the universal ribosomal protein uL2 family. As to quaternary structure, part of the 50S ribosomal subunit. Forms a bridge to the 30S subunit in the 70S ribosome.

Functionally, one of the primary rRNA binding proteins. Required for association of the 30S and 50S subunits to form the 70S ribosome, for tRNA binding and peptide bond formation. It has been suggested to have peptidyltransferase activity; this is somewhat controversial. Makes several contacts with the 16S rRNA in the 70S ribosome. The chain is Large ribosomal subunit protein uL2 from Pyrobaculum arsenaticum (strain DSM 13514 / JCM 11321 / PZ6).